The primary structure comprises 63 residues: uncharacterized protein (63 aa).

2 helical membrane-spanning segments follow: residues 3 to 23 (VFLI…VYYI) and 42 to 62 (ALVC…TKLL).

It localises to the cell membrane. This is an uncharacterized protein from Bacillus subtilis (strain 168).